The primary structure comprises 130 residues: Albumin-1 F (130 aa).

The signal sequence occupies residues 1-26; it reads MASVKLASLIVLFATLGMFLTKNVGA. Cystine bridges form between C29–C46, C33–C48, and C41–C58. Propeptides lie at residues 64-69 and 123-130; these read VFLRTN and LLKSVSTA.

Post-translationally, the C-terminal glycine may be removed from PA1b.

In terms of biological role, PA1b binds to basic 7S globulin (BG) and stimulates its phosphorylation activity. Involved in the signal transduction system to regulate the growth and differentiation as a hormone peptide. Toxic to various insects through binding to a high affinity binding site in the insect gut. This is Albumin-1 F from Pisum sativum (Garden pea).